The following is a 1171-amino-acid chain: ATP-dependent helicase/deoxyribonuclease subunit B (1171 aa).

In terms of domain architecture, UvrD-like helicase ATP-binding spans 1 to 390; sequence MSLRFVIGRA…HPLVECIRSA (390 aa). An ATP-binding site is contributed by 8-15; sequence GRAGSGKS. The UvrD-like helicase C-terminal domain maps to 281-587; that stretch reads MEQPRFHSPA…QFANIPPSLD (307 aa). [4Fe-4S] cluster contacts are provided by Cys-805, Cys-1129, Cys-1132, and Cys-1138.

This sequence belongs to the helicase family. AddB/RexB type 1 subfamily. In terms of assembly, heterodimer of AddA and AddB. Requires Mg(2+) as cofactor. It depends on [4Fe-4S] cluster as a cofactor.

In terms of biological role, the heterodimer acts as both an ATP-dependent DNA helicase and an ATP-dependent, dual-direction single-stranded exonuclease. Recognizes the chi site generating a DNA molecule suitable for the initiation of homologous recombination. The AddB subunit has 5' -&gt; 3' nuclease activity but not helicase activity. The protein is ATP-dependent helicase/deoxyribonuclease subunit B of Bacillus cereus (strain B4264).